Consider the following 657-residue polypeptide: Methylenetetrahydrofolate reductase 1 (657 aa).

The active-site Proton donor/acceptor is the Glu18. NAD(+) is bound by residues 18-23 (EFFPPK) and 49-50 (TW). FAD contacts are provided by residues 49–50 (TW), His78, and 108–110 (RGD). Asp110 contributes to the substrate binding site. Ser120 carries the post-translational modification Phosphoserine. FAD is bound by residues 129–130 (YA), Tyr152, Asp171, and Lys178. 2 residues coordinate substrate: Gln189 and Tyr286. Phosphoserine is present on Ser301. The segment at 308–329 (VNESSEEEGEDETSGEIGSIEN) is disordered. The span at 311–321 (SSEEEGEDETS) shows a compositional bias: acidic residues. Ser358 bears the Phosphoserine mark.

This sequence belongs to the methylenetetrahydrofolate reductase family. The cofactor is FAD.

The catalysed reaction is (6S)-5-methyl-5,6,7,8-tetrahydrofolate + NADP(+) = (6R)-5,10-methylene-5,6,7,8-tetrahydrofolate + NADPH + H(+). It catalyses the reaction (6S)-5-methyl-5,6,7,8-tetrahydrofolate + NAD(+) = (6R)-5,10-methylene-5,6,7,8-tetrahydrofolate + NADH + H(+). It participates in one-carbon metabolism; tetrahydrofolate interconversion. The sequence is that of Methylenetetrahydrofolate reductase 1 (MET12) from Saccharomyces cerevisiae (strain ATCC 204508 / S288c) (Baker's yeast).